The primary structure comprises 418 residues: Protein-lysine 6-oxidase (418 aa).

The signal sequence occupies residues M1–C20. Residues A21 to G169 constitute a propeptide, removed by BMP1. The interval Y63–P84 is disordered. Residues G72–P84 show a composition bias toward low complexity. N-linked (GlcNAc...) asparagine glycans are attached at residues N80, N96, and N143. The segment at T130–P175 is disordered. The segment covering R140–R157 has biased composition (polar residues). Y188 is subject to Sulfotyrosine. The interval P214–Y418 is lysyl-oxidase like. 5 cysteine pairs are disulfide-bonded: C239/C245, C292/C341, C325/C331, C352/C362, and C399/C413. Cu cation-binding residues include H293, H295, and H297. The lysine tyrosylquinone (Lys-Tyr) cross-link spans K321–Y356. Y356 bears the 2',4',5'-topaquinone mark.

Belongs to the lysyl oxidase family. In terms of assembly, interacts with MFAP4. Interacts (via propeptide) with EFEMP2; this interaction is strong and facilitates formation of ternary complexes with ELN during elastic fiber assembly; this interaction limits interaction of EFEMP2 with FBLN5. Cu cation serves as cofactor. Lysine tyrosylquinone residue is required as a cofactor. Post-translationally, the lysine tyrosylquinone cross-link (LTQ) is generated by condensation of the epsilon-amino group of a lysine with a topaquinone produced by oxidation of tyrosine. Proteolytically cleaved by BMP1 which removes the propeptide. Also proteolytically cleaved by ADAMTS2 and ADAMTS14, but not by ADAMTS3, at an additional cleavage site downstream of the BMP1 cleavage site. The propeptide plays a role in directing the deposition of this enzyme to elastic fibers, via interaction with tropoelastin. Cleavage by BMP1 to remove the propeptide does not increase enzymatic activity but increases binding to collagen. Cleavage by ADAMTS2 produces a form with reduced collagen-binding activity. In terms of processing, sulfated at Tyr-188 and also at either Tyr-184 or Tyr-185 which enhances binding to collagen.

Its subcellular location is the secreted. It is found in the extracellular space. It carries out the reaction L-lysyl-[protein] + O2 + H2O = (S)-2-amino-6-oxohexanoyl-[protein] + H2O2 + NH4(+). In terms of biological role, responsible for the post-translational oxidative deamination of peptidyl lysine residues in precursors to fibrous collagen and elastin. Regulator of Ras expression. May play a role in tumor suppression. Plays a role in the aortic wall architecture. This is Protein-lysine 6-oxidase from Bos taurus (Bovine).